We begin with the raw amino-acid sequence, 303 residues long: UDP-3-O-acyl-N-acetylglucosamine deacetylase (303 aa).

Zn(2+) is bound by residues H78, H237, and D241. The active-site Proton donor is H264.

Belongs to the LpxC family. The cofactor is Zn(2+).

It carries out the reaction a UDP-3-O-[(3R)-3-hydroxyacyl]-N-acetyl-alpha-D-glucosamine + H2O = a UDP-3-O-[(3R)-3-hydroxyacyl]-alpha-D-glucosamine + acetate. Its pathway is glycolipid biosynthesis; lipid IV(A) biosynthesis; lipid IV(A) from (3R)-3-hydroxytetradecanoyl-[acyl-carrier-protein] and UDP-N-acetyl-alpha-D-glucosamine: step 2/6. Its function is as follows. Catalyzes the hydrolysis of UDP-3-O-myristoyl-N-acetylglucosamine to form UDP-3-O-myristoylglucosamine and acetate, the committed step in lipid A biosynthesis. In Pseudomonas entomophila (strain L48), this protein is UDP-3-O-acyl-N-acetylglucosamine deacetylase.